A 321-amino-acid chain; its full sequence is Cytochrome c biogenesis protein CcsA (321 aa).

Transmembrane regions (helical) follow at residues I17 to I37, K43 to S63, M143 to I163, V225 to N245, E258 to R275, and I287 to G307.

It belongs to the CcmF/CycK/Ccl1/NrfE/CcsA family. As to quaternary structure, may interact with Ccs1.

The protein localises to the plastid. The protein resides in the chloroplast thylakoid membrane. In terms of biological role, required during biogenesis of c-type cytochromes (cytochrome c6 and cytochrome f) at the step of heme attachment. The chain is Cytochrome c biogenesis protein CcsA from Drimys granadensis.